Consider the following 112-residue polypeptide: MLELVKVLGLFAITALAEIIGCYLPWLVLTQQRPVWLLIPAAVSLGLFAWLLTLHPGAAGRIYAAYGGVYVAIALIWLWRIDGVVPTRWDLVGSAVSLAGMAIIMLQPARSV.

The next 4 helical transmembrane spans lie at 7 to 27 (VLGL…LPWL), 34 to 54 (PVWL…LLTL), 59 to 79 (AGRI…IWLW), and 89 to 109 (WDLV…LQPA).

It belongs to the UPF0060 family.

The protein localises to the cell inner membrane. In Dechloromonas aromatica (strain RCB), this protein is UPF0060 membrane protein Daro_2632.